The following is a 241-amino-acid chain: Protein unc-119 homolog B-B (241 aa).

Positions Met-1–Ser-46 are disordered. Tetradecanoate is bound at residue Tyr-132.

This sequence belongs to the PDE6D/unc-119 family.

The protein localises to the cell projection. The protein resides in the cilium. Its function is as follows. Myristoyl-binding protein that acts as a cargo adapter: specifically binds the myristoyl moiety of a subset of N-terminally myristoylated proteins and is required for their localization. Plays a key role in localization of proteins to the primary cilium membrane. The chain is Protein unc-119 homolog B-B (unc119b-b) from Xenopus laevis (African clawed frog).